Reading from the N-terminus, the 164-residue chain is MKTAVYPGSFDPITKGHLNIIKRASKVCDKLIVAVLVNPEKKGLFSVDERVEMIKRVTKKHSNVEVQCFSGLLIDFMKEKKSKVIIKGLRTMSDFEYEFKMALMNNKLDPNIETVFMMTNAKYSYLSSSSVKQVAMFGGCIKDLVPDEIIPDIKKKINHKKECI.

Substrate is bound at residue Ser9. ATP contacts are provided by residues 9–10 and His17; that span reads SF. The substrate site is built by Lys41, Leu73, and Lys87. Residues 88–90, Glu98, and 123–129 contribute to the ATP site; these read GLR and YSYLSSS.

This sequence belongs to the bacterial CoaD family. Homohexamer. It depends on Mg(2+) as a cofactor.

Its subcellular location is the cytoplasm. It catalyses the reaction (R)-4'-phosphopantetheine + ATP + H(+) = 3'-dephospho-CoA + diphosphate. It functions in the pathway cofactor biosynthesis; coenzyme A biosynthesis; CoA from (R)-pantothenate: step 4/5. Reversibly transfers an adenylyl group from ATP to 4'-phosphopantetheine, yielding dephospho-CoA (dPCoA) and pyrophosphate. This Clostridium botulinum (strain ATCC 19397 / Type A) protein is Phosphopantetheine adenylyltransferase.